Reading from the N-terminus, the 107-residue chain is UPF0060 membrane protein glr4174 (107 aa).

4 helical membrane passes run 1 to 21 (MALL…FAFW), 26 to 46 (LGKN…FAWL), 58 to 78 (AYAA…WLVE), and 87 to 107 (LAGA…DRSP).

This sequence belongs to the UPF0060 family.

It is found in the cell inner membrane. The sequence is that of UPF0060 membrane protein glr4174 from Gloeobacter violaceus (strain ATCC 29082 / PCC 7421).